The sequence spans 295 residues: Phosphoserine phosphatase, chloroplastic (295 aa).

The N-terminal 54 residues, 1–54 (MEALTTSRVVPVQVPCRKLSSLFANFSCLELRRYPCRGLVSIMNHPKLLRPVTA), are a transit peptide targeting the chloroplast. Residue D89 is the Nucleophile of the active site. 2 residues coordinate Mg(2+): D89 and D91. The Proton donor role is filled by D91. Substrate is bound by residues E98, R134, 178–179 (SG), and K227. Position 248 (D248) interacts with Mg(2+).

Belongs to the HAD-like hydrolase superfamily. SerB family. The cofactor is Mg(2+). Ubiquitous. Mainly expressed in shoot and root meristems, vasculature, pollen, anthers, carpels and seeds.

It localises to the plastid. The protein localises to the chloroplast. The enzyme catalyses O-phospho-L-serine + H2O = L-serine + phosphate. It carries out the reaction O-phospho-D-serine + H2O = D-serine + phosphate. It participates in amino-acid biosynthesis; L-serine biosynthesis; L-serine from 3-phospho-D-glycerate: step 3/3. With respect to regulation, approximately 60% inhibition of PSP activity is observed in presence of 10 mM serine. Catalyzes the last step in the plastidial phosphorylated pathway of serine biosynthesis (PPSB). The reaction mechanism proceeds via the formation of a phosphoryl-enzyme intermediates. Required for embryo, pollen and root development. May be required preferentially for serine biosynthesis in non-photosynthetic tissues. In Arabidopsis thaliana (Mouse-ear cress), this protein is Phosphoserine phosphatase, chloroplastic (PSP).